Consider the following 201-residue polypeptide: Recombination protein RecR (201 aa).

Residues 57-74 (CRICGNITENSVNPCAIC) form a C4-type zinc finger. The Toprim domain occupies 82-178 (STVFVVENSR…KVTRLAHGLA (97 aa)).

The protein belongs to the RecR family.

Its function is as follows. May play a role in DNA repair. It seems to be involved in an RecBC-independent recombinational process of DNA repair. It may act with RecF and RecO. This chain is Recombination protein RecR, found in Leuconostoc citreum (strain KM20).